A 198-amino-acid polypeptide reads, in one-letter code: Chromophore lyase CpcT/CpeT 3 (198 aa).

It belongs to the CpcT/CpeT biliprotein lyase family.

In terms of biological role, covalently attaches a chromophore to Cys residue(s) of phycobiliproteins. The protein is Chromophore lyase CpcT/CpeT 3 of Synechococcus sp. (strain JA-3-3Ab) (Cyanobacteria bacterium Yellowstone A-Prime).